We begin with the raw amino-acid sequence, 339 residues long: MNDAAPDRQASVDFHLQALHPWLSRQDIAEICVNRPGQLWYEDRNGWNRQESGALTLDHLHALATATARFCDRDICPERPLLAASLPGGERVQIVVPPACEPGTLSLTIRKPARRIWPLSELLRDALDLPGVPGASQARPDPLLDPWRRGAWDDFLRLAVQAGKAILVAGQTGSGKTTLMNALSGEIPPRERIVTIEDVRELRLDPATNHVHLLYGTPTEGRTAAVSATELLRAALRMAPTRILLAELRGGEAFDFLQACASGHSGGISTCHAASADMALQRLTLMCMQHPNCQMLPYSTLRALVESVIDIVVVVERRAGQGARRRVVDIWYRDGLPAP.

The protein belongs to the GSP E family.

This is Type IV secretion system protein PtlH homolog (ptlH) from Bordetella bronchiseptica (strain ATCC BAA-588 / NCTC 13252 / RB50) (Alcaligenes bronchisepticus).